Consider the following 122-residue polypeptide: Large ribosomal subunit protein uL14 (122 aa).

Belongs to the universal ribosomal protein uL14 family. As to quaternary structure, part of the 50S ribosomal subunit. Forms a cluster with proteins L3 and L19. In the 70S ribosome, L14 and L19 interact and together make contacts with the 16S rRNA in bridges B5 and B8.

Functionally, binds to 23S rRNA. Forms part of two intersubunit bridges in the 70S ribosome. The chain is Large ribosomal subunit protein uL14 from Rickettsia massiliae (strain Mtu5).